The following is a 335-amino-acid chain: Glyceraldehyde-3-phosphate dehydrogenase 2 (335 aa).

NAD(+) is bound by residues 13–14 (RI), Asp35, and Arg80. Ser125 and Ser151 each carry phosphoserine. Residue 151–153 (SCT) coordinates D-glyceraldehyde 3-phosphate. Cys152 functions as the Nucleophile in the catalytic mechanism. 4 positions are modified to phosphothreonine: Thr153, Thr154, Thr182, and Thr184. Position 182 (Thr182) interacts with D-glyceraldehyde 3-phosphate. Phosphoserine is present on residues Ser192, Ser203, and Ser209. Phosphothreonine is present on Thr211. D-glyceraldehyde 3-phosphate contacts are provided by residues 211–212 (TG) and Arg234. The residue at position 237 (Thr237) is a Phosphothreonine. Ser241 is subject to Phosphoserine. Asn316 contacts NAD(+).

The protein belongs to the glyceraldehyde-3-phosphate dehydrogenase family. As to quaternary structure, homotetramer.

It localises to the cytoplasm. The enzyme catalyses D-glyceraldehyde 3-phosphate + phosphate + NAD(+) = (2R)-3-phospho-glyceroyl phosphate + NADH + H(+). It participates in carbohydrate degradation; glycolysis; pyruvate from D-glyceraldehyde 3-phosphate: step 1/5. In Schizosaccharomyces pombe (strain 972 / ATCC 24843) (Fission yeast), this protein is Glyceraldehyde-3-phosphate dehydrogenase 2 (gpd3).